The sequence spans 142 residues: Ribosome maturation factor RimP (142 aa).

This sequence belongs to the RimP family.

It localises to the cytoplasm. Required for maturation of 30S ribosomal subunits. This is Ribosome maturation factor RimP from Wolinella succinogenes (strain ATCC 29543 / DSM 1740 / CCUG 13145 / JCM 31913 / LMG 7466 / NCTC 11488 / FDC 602W) (Vibrio succinogenes).